A 376-amino-acid chain; its full sequence is Glutamate 5-kinase (376 aa).

K15 lines the ATP pocket. The substrate site is built by S56, D143, and N155. 175–176 (SD) contributes to the ATP binding site. The PUA domain maps to 281–358 (KGTLTIDAGA…PDVMMILGIS (78 aa)).

This sequence belongs to the glutamate 5-kinase family.

The protein localises to the cytoplasm. The enzyme catalyses L-glutamate + ATP = L-glutamyl 5-phosphate + ADP. The protein operates within amino-acid biosynthesis; L-proline biosynthesis; L-glutamate 5-semialdehyde from L-glutamate: step 1/2. Functionally, catalyzes the transfer of a phosphate group to glutamate to form L-glutamate 5-phosphate. This Rhodopseudomonas palustris (strain BisB5) protein is Glutamate 5-kinase.